Consider the following 155-residue polypeptide: Rusticyanin (155 aa).

In terms of domain architecture, Plastocyanin-like spans Ser-53–Lys-155. His-85, Cys-138, His-143, and Met-148 together coordinate Cu cation.

In terms of assembly, monomer. It depends on Cu cation as a cofactor.

It is found in the periplasm. Electron carrier from cytochrome c552 to the A-type oxidase. This chain is Rusticyanin (rus), found in Acidithiobacillus ferrooxidans (Thiobacillus ferrooxidans).